We begin with the raw amino-acid sequence, 539 residues long: MVSESITPQQWISYGITGYRELVYNPGYDQLFAEEIDPALSGFERGTLTQSGAVAVDTGIFTGRSPFDKYVVRDDKTRDTLWWSDQGKGANDNHPLDQQTWVHLKRRVGKQLSGKRLFVIDAFCGANEDSRLRVRFVTEVAWQAHFVKNMFIRPSDEELRDFEPDFVVLNGAKCTNPDWREQGLHSENFVAFNLTEGIQLIGGTWYGGEMKKGLFSVMNYLLPLKGIASMHCSANVGTDDDVALFFGLSGTGKTTLSTDPRRRLIGDDEHGWDDDGVFNFEGGCYAKTIRLSPEAEPEIYQAIRRNALLENVVVRADGSVDYDDGSKTENARVSYPIDHIDNIVKPVSRAGHATRVIFLTADAFGVLPPVASLSMEQAQYHFLSGFTAKLGGTERGVVAPVPTFSACFGAAFLSLHPTAYADVLAKRMHAAGARAYLVNTGWNGSGKRISLKDTRTIINAILRSDIDDAPTATLPVFNLTIPTALPGVNGAILDPRTTYASVDEWRAKADDLAQRFIDNFSKFTDTPAGVALVSAGPQR.

Residues Arg64, Tyr206, and Lys212 each contribute to the substrate site. ATP is bound by residues Lys212, His231, and 247 to 255 (GLSGTGKTT). The Mn(2+) site is built by Lys212 and His231. Asp268 serves as a coordination point for Mn(2+). Residues Glu296, Arg332, 448–449 (RI), and Thr454 each bind ATP. Arg332 is a binding site for substrate.

Belongs to the phosphoenolpyruvate carboxykinase (ATP) family. As to quaternary structure, monomer. The cofactor is Mn(2+).

Its subcellular location is the cytoplasm. The enzyme catalyses oxaloacetate + ATP = phosphoenolpyruvate + ADP + CO2. It functions in the pathway carbohydrate biosynthesis; gluconeogenesis. In terms of biological role, involved in the gluconeogenesis. Catalyzes the conversion of oxaloacetate (OAA) to phosphoenolpyruvate (PEP) through direct phosphoryl transfer between the nucleoside triphosphate and OAA. The protein is Phosphoenolpyruvate carboxykinase (ATP) of Sodalis glossinidius (strain morsitans).